The following is a 323-amino-acid chain: Mycothiol acetyltransferase (323 aa).

Glutamate 44 contacts 1D-myo-inositol 2-(L-cysteinylamino)-2-deoxy-alpha-D-glucopyranoside. 98 to 100 is a binding site for acetyl-CoA; sequence LAV. Residues 173-323 enclose the N-acetyltransferase domain; it reads VSLRAFIPGQ…DVMYGPKNGG (151 aa). 3 residues coordinate 1D-myo-inositol 2-(L-cysteinylamino)-2-deoxy-alpha-D-glucopyranoside: glutamate 200, lysine 240, and glutamate 253. Acetyl-CoA-binding positions include 257-259 and 264-270; these read VGV and QGMGLGK. Position 291 (tyrosine 291) interacts with 1D-myo-inositol 2-(L-cysteinylamino)-2-deoxy-alpha-D-glucopyranoside.

Belongs to the acetyltransferase family. MshD subfamily. As to quaternary structure, monomer.

It carries out the reaction 1D-myo-inositol 2-(L-cysteinylamino)-2-deoxy-alpha-D-glucopyranoside + acetyl-CoA = mycothiol + CoA + H(+). Catalyzes the transfer of acetyl from acetyl-CoA to desacetylmycothiol (Cys-GlcN-Ins) to form mycothiol. This chain is Mycothiol acetyltransferase, found in Arthrobacter sp. (strain FB24).